Consider the following 501-residue polypeptide: L-arabinose isomerase (501 aa).

Residues glutamate 306, glutamate 333, histidine 350, and histidine 450 each coordinate Mn(2+).

Belongs to the arabinose isomerase family. As to quaternary structure, homohexamer. It depends on Mn(2+) as a cofactor.

It catalyses the reaction beta-L-arabinopyranose = L-ribulose. Its pathway is carbohydrate degradation; L-arabinose degradation via L-ribulose; D-xylulose 5-phosphate from L-arabinose (bacterial route): step 1/3. Functionally, catalyzes the conversion of L-arabinose to L-ribulose. This chain is L-arabinose isomerase, found in Pectobacterium atrosepticum (strain SCRI 1043 / ATCC BAA-672) (Erwinia carotovora subsp. atroseptica).